The following is a 172-amino-acid chain: Adenine phosphoribosyltransferase (172 aa).

The protein belongs to the purine/pyrimidine phosphoribosyltransferase family. Homodimer.

Its subcellular location is the cytoplasm. It carries out the reaction AMP + diphosphate = 5-phospho-alpha-D-ribose 1-diphosphate + adenine. Its pathway is purine metabolism; AMP biosynthesis via salvage pathway; AMP from adenine: step 1/1. Its function is as follows. Catalyzes a salvage reaction resulting in the formation of AMP, that is energically less costly than de novo synthesis. The protein is Adenine phosphoribosyltransferase of Synechococcus sp. (strain CC9311).